The chain runs to 388 residues: ATP phosphoribosyltransferase regulatory subunit (388 aa).

The protein belongs to the class-II aminoacyl-tRNA synthetase family. HisZ subfamily. In terms of assembly, heteromultimer composed of HisG and HisZ subunits.

Its subcellular location is the cytoplasm. It participates in amino-acid biosynthesis; L-histidine biosynthesis; L-histidine from 5-phospho-alpha-D-ribose 1-diphosphate: step 1/9. Functionally, required for the first step of histidine biosynthesis. May allow the feedback regulation of ATP phosphoribosyltransferase activity by histidine. This is ATP phosphoribosyltransferase regulatory subunit from Acinetobacter baumannii (strain AB307-0294).